The following is a 74-amino-acid chain: Imcroporin (74 aa).

The N-terminal stretch at 1–22 is a signal peptide; it reads MKFQYLLAVFLIVLVVTDHCQA. The residue at position 39 (Lys-39) is a Lysine amide; partial. Positions 45 to 74 are excised as a propeptide; it reads QLEARFEPKQRNFRKRELDFEKLFANMPDY.

It belongs to the non-disulfide-bridged peptide (NDBP) superfamily. Short antimicrobial peptide (group 4) family. Expressed by the venom gland.

The protein resides in the secreted. It localises to the target cell membrane. Its function is as follows. Has potent antibacterial activity against Gram-positive bacteria M.luteus, B.thuringiensis, S.aureus and B.subtilis, but not Gram-negative bacteria. Shows a weak cytotoxicity effect against mammalian cell lines and relatively low hemolytic activity against human erythrocytes. This chain is Imcroporin, found in Isometrus maculatus (Lesser brown scorpion).